A 169-amino-acid chain; its full sequence is Endoribonuclease YbeY (169 aa).

Residues H130, H134, and H140 each coordinate Zn(2+).

Belongs to the endoribonuclease YbeY family. Zn(2+) is required as a cofactor.

The protein localises to the cytoplasm. In terms of biological role, single strand-specific metallo-endoribonuclease involved in late-stage 70S ribosome quality control and in maturation of the 3' terminus of the 16S rRNA. The protein is Endoribonuclease YbeY of Neisseria meningitidis serogroup B (strain ATCC BAA-335 / MC58).